The chain runs to 372 residues: N-methyl-L-tryptophan oxidase (372 aa).

An FAD-binding site is contributed by 4–34 (DLIIIGSGSVGAAAGYYATRAGLNVLMTDAH). Cys-308 is modified (S-8alpha-FAD cysteine).

It belongs to the MSOX/MTOX family. MTOX subfamily. As to quaternary structure, monomer. Requires FAD as cofactor.

The enzyme catalyses N(alpha)-methyl-L-tryptophan + O2 + H2O = L-tryptophan + formaldehyde + H2O2. Its function is as follows. Catalyzes the oxidative demethylation of N-methyl-L-tryptophan. This chain is N-methyl-L-tryptophan oxidase, found in Escherichia coli O6:H1 (strain CFT073 / ATCC 700928 / UPEC).